Here is a 289-residue protein sequence, read N- to C-terminus: Cyclin-dependent kinase 2 homolog (289 aa).

Residues 4 to 285 (YHGLEKIGEG…AKQAIEHPYF (282 aa)) enclose the Protein kinase domain. Residues 10–18 (IGEGTYGVV) and Lys-32 each bind ATP. At Thr-14 the chain carries Phosphothreonine. Phosphotyrosine is present on Tyr-15. Catalysis depends on Asp-126, which acts as the Proton acceptor. At Thr-159 the chain carries Phosphothreonine.

The protein belongs to the protein kinase superfamily. CMGC Ser/Thr protein kinase family. CDC2/CDKX subfamily. May form a complex composed of at least the catalytic subunit CRK2 and a cyclin. The cofactor is Mg(2+).

The protein localises to the cytoplasm. It carries out the reaction L-seryl-[protein] + ATP = O-phospho-L-seryl-[protein] + ADP + H(+). It catalyses the reaction L-threonyl-[protein] + ATP = O-phospho-L-threonyl-[protein] + ADP + H(+). The enzyme catalyses [DNA-directed RNA polymerase] + ATP = phospho-[DNA-directed RNA polymerase] + ADP + H(+). With respect to regulation, phosphorylation at Thr-14 or Tyr-15 inactivates the enzyme, while phosphorylation at Thr-159 activates it. Its function is as follows. Serine/threonine-protein kinase. Involved in the control of the cell cycle. Required for entry into S-phase and mitosis. Probable component of the kinase complex that phosphorylates the repetitive C-terminus of RNA polymerase II. The chain is Cyclin-dependent kinase 2 homolog from Plasmodium yoelii yoelii.